The primary structure comprises 184 residues: ATP synthase subunit delta (184 aa).

The protein belongs to the ATPase delta chain family. As to quaternary structure, F-type ATPases have 2 components, F(1) - the catalytic core - and F(0) - the membrane proton channel. F(1) has five subunits: alpha(3), beta(3), gamma(1), delta(1), epsilon(1). F(0) has three main subunits: a(1), b(2) and c(10-14). The alpha and beta chains form an alternating ring which encloses part of the gamma chain. F(1) is attached to F(0) by a central stalk formed by the gamma and epsilon chains, while a peripheral stalk is formed by the delta and b chains.

The protein localises to the cell membrane. In terms of biological role, f(1)F(0) ATP synthase produces ATP from ADP in the presence of a proton or sodium gradient. F-type ATPases consist of two structural domains, F(1) containing the extramembraneous catalytic core and F(0) containing the membrane proton channel, linked together by a central stalk and a peripheral stalk. During catalysis, ATP synthesis in the catalytic domain of F(1) is coupled via a rotary mechanism of the central stalk subunits to proton translocation. Its function is as follows. This protein is part of the stalk that links CF(0) to CF(1). It either transmits conformational changes from CF(0) to CF(1) or is implicated in proton conduction. This is ATP synthase subunit delta from Amoebophilus asiaticus (strain 5a2).